Here is a 111-residue protein sequence, read N- to C-terminus: Large ribosomal subunit protein uL24 (111 aa).

Belongs to the universal ribosomal protein uL24 family. Part of the 50S ribosomal subunit.

Its function is as follows. One of two assembly initiator proteins, it binds directly to the 5'-end of the 23S rRNA, where it nucleates assembly of the 50S subunit. In terms of biological role, one of the proteins that surrounds the polypeptide exit tunnel on the outside of the subunit. This is Large ribosomal subunit protein uL24 from Chlamydia muridarum (strain MoPn / Nigg).